Consider the following 239-residue polypeptide: 1-(5-phosphoribosyl)-5-[(5-phosphoribosylamino)methylideneamino] imidazole-4-carboxamide isomerase (239 aa).

Asp-8 acts as the Proton acceptor in catalysis. Asp-129 (proton donor) is an active-site residue.

This sequence belongs to the HisA/HisF family.

Its subcellular location is the cytoplasm. It carries out the reaction 1-(5-phospho-beta-D-ribosyl)-5-[(5-phospho-beta-D-ribosylamino)methylideneamino]imidazole-4-carboxamide = 5-[(5-phospho-1-deoxy-D-ribulos-1-ylimino)methylamino]-1-(5-phospho-beta-D-ribosyl)imidazole-4-carboxamide. Its pathway is amino-acid biosynthesis; L-histidine biosynthesis; L-histidine from 5-phospho-alpha-D-ribose 1-diphosphate: step 4/9. The chain is 1-(5-phosphoribosyl)-5-[(5-phosphoribosylamino)methylideneamino] imidazole-4-carboxamide isomerase from Cereibacter sphaeroides (strain ATCC 17029 / ATH 2.4.9) (Rhodobacter sphaeroides).